An 899-amino-acid chain; its full sequence is Protein translocase subunit SecA (899 aa).

ATP is bound by residues Gln87, 105–109, and Asp512; that span reads GEGKT. Disordered regions lie at residues 573 to 592 and 861 to 899; these read RRID…PGSS and ITVN…CCGK. Residues Cys885, Cys887, Cys896, and Cys897 each contribute to the Zn(2+) site.

It belongs to the SecA family. As to quaternary structure, monomer and homodimer. Part of the essential Sec protein translocation apparatus which comprises SecA, SecYEG and auxiliary proteins SecDF-YajC and YidC. The cofactor is Zn(2+).

The protein resides in the cell inner membrane. It is found in the cytoplasm. It carries out the reaction ATP + H2O + cellular proteinSide 1 = ADP + phosphate + cellular proteinSide 2.. Part of the Sec protein translocase complex. Interacts with the SecYEG preprotein conducting channel. Has a central role in coupling the hydrolysis of ATP to the transfer of proteins into and across the cell membrane, serving as an ATP-driven molecular motor driving the stepwise translocation of polypeptide chains across the membrane. This is Protein translocase subunit SecA from Trichlorobacter lovleyi (strain ATCC BAA-1151 / DSM 17278 / SZ) (Geobacter lovleyi).